The following is a 336-amino-acid chain: Transcription initiation factor IIB (336 aa).

The TFIIB-type zinc-finger motif lies at 41–72; that stretch reads QKLRCPICGNTVFIEDAERGQIVCASCGYVLM. Residues C45, C48, C64, and C67 each coordinate Zn(2+). 2 repeat units span residues 152–235 and 246–327.

It belongs to the TFIIB family.

Functionally, stabilizes TBP binding to an archaeal box-A promoter. Also responsible for recruiting RNA polymerase II to the pre-initiation complex (DNA-TBP-TFIIB). This Caldivirga maquilingensis (strain ATCC 700844 / DSM 13496 / JCM 10307 / IC-167) protein is Transcription initiation factor IIB.